Reading from the N-terminus, the 95-residue chain is Co-chaperonin GroES (95 aa).

It belongs to the GroES chaperonin family. As to quaternary structure, heptamer of 7 subunits arranged in a ring. Interacts with the chaperonin GroEL.

It localises to the cytoplasm. In terms of biological role, together with the chaperonin GroEL, plays an essential role in assisting protein folding. The GroEL-GroES system forms a nano-cage that allows encapsulation of the non-native substrate proteins and provides a physical environment optimized to promote and accelerate protein folding. GroES binds to the apical surface of the GroEL ring, thereby capping the opening of the GroEL channel. The chain is Co-chaperonin GroES from Pseudoalteromonas translucida (strain TAC 125).